The following is a 211-amino-acid chain: Probable superoxide dismutase [Mn], mitochondrial (211 aa).

Mn(2+)-binding residues include His-36, His-84, Asp-173, and His-177.

This sequence belongs to the iron/manganese superoxide dismutase family. Homotetramer. The cofactor is Mn(2+).

The protein localises to the mitochondrion matrix. The catalysed reaction is 2 superoxide + 2 H(+) = H2O2 + O2. In terms of biological role, destroys superoxide anion radicals which are normally produced within the cells and which are toxic to biological systems. The sequence is that of Probable superoxide dismutase [Mn], mitochondrial from Debaryomyces hansenii (strain ATCC 36239 / CBS 767 / BCRC 21394 / JCM 1990 / NBRC 0083 / IGC 2968) (Yeast).